The sequence spans 495 residues: GTPase Der (495 aa).

2 EngA-type G domains span residues 3-166 (PVVA…VQDE) and 208-381 (IKLA…SCAT). GTP contacts are provided by residues 9–16 (GRPNVGKS), 56–60 (DTGGI), 118–121 (NKTD), 214–221 (GRPNVGKS), 261–265 (DTAGV), and 326–329 (NKWD). The KH-like domain occupies 382-466 (RRVSTAMLTR…PIRIQFKEGE (85 aa)).

This sequence belongs to the TRAFAC class TrmE-Era-EngA-EngB-Septin-like GTPase superfamily. EngA (Der) GTPase family. As to quaternary structure, associates with the 50S ribosomal subunit.

Functionally, GTPase that plays an essential role in the late steps of ribosome biogenesis. This chain is GTPase Der, found in Pectobacterium atrosepticum (strain SCRI 1043 / ATCC BAA-672) (Erwinia carotovora subsp. atroseptica).